The chain runs to 443 residues: Chromosomal replication initiator protein DnaA (443 aa).

The tract at residues 1–67 is domain I, interacts with DnaA modulators; that stretch reads MDAWSRSLER…RELLAHFAGF (67 aa). A domain II region spans residues 67-105; sequence FSDVFLEIGSRPRPVEAQNAPVSTPSAHVSSEPQVPFAG. Residues 106-323 are domain III, AAA+ region; sequence NLDNHYTFAN…GALNTLTARA (218 aa). ATP is bound by residues Gly151, Gly153, Lys154, and Thr155. Positions 324–443 are domain IV, binds dsDNA; the sequence is NFTGRAITTE…WDKLIRKLSE (120 aa).

It belongs to the DnaA family. Oligomerizes as a right-handed, spiral filament on DNA at oriC.

The protein resides in the cytoplasm. Functionally, plays an essential role in the initiation and regulation of chromosomal replication. ATP-DnaA binds to the origin of replication (oriC) to initiate formation of the DNA replication initiation complex once per cell cycle. Binds the DnaA box (a 9 base pair repeat at the origin) and separates the double-stranded (ds)DNA. Forms a right-handed helical filament on oriC DNA; dsDNA binds to the exterior of the filament while single-stranded (ss)DNA is stabiized in the filament's interior. The ATP-DnaA-oriC complex binds and stabilizes one strand of the AT-rich DNA unwinding element (DUE), permitting loading of DNA polymerase. After initiation quickly degrades to an ADP-DnaA complex that is not apt for DNA replication. Binds acidic phospholipids. In Stenotrophomonas maltophilia (strain K279a), this protein is Chromosomal replication initiator protein DnaA.